The sequence spans 424 residues: Probable ribonuclease FAU-1 (424 aa).

It belongs to the FAU-1 family.

Probable RNase involved in rRNA stability through maturation and/or degradation of precursor rRNAs. Binds to RNA in loop regions with AU-rich sequences. The protein is Probable ribonuclease FAU-1 of Saccharolobus islandicus (strain M.16.27) (Sulfolobus islandicus).